Here is a 133-residue protein sequence, read N- to C-terminus: Small ribosomal subunit protein bS6 (133 aa).

A compositionally biased stretch (basic and acidic residues) spans 106 to 125; sequence REERVERAPRAPRPEVKAEP. The disordered stretch occupies residues 106-133; it reads REERVERAPRAPRPEVKAEPEAEATAEA.

Belongs to the bacterial ribosomal protein bS6 family.

Its function is as follows. Binds together with bS18 to 16S ribosomal RNA. This is Small ribosomal subunit protein bS6 from Psychromonas ingrahamii (strain DSM 17664 / CCUG 51855 / 37).